The following is a 714-amino-acid chain: Fumarate reductase flavoprotein subunit (714 aa).

Residues 13 to 16 (GGLA), 42 to 44 (SHS), and 49 to 50 (GG) each bind FAD. His-43 carries the post-translational modification Tele-8alpha-FAD histidine. Active-site residues include His-257 and Arg-273. FAD is bound by residues Glu-420 and 436–437 (SV).

It belongs to the FAD-dependent oxidoreductase 2 family. FRD/SDH subfamily. In terms of assembly, part of an enzyme complex containing three subunits: a flavoprotein (frdA), an iron-sulfur protein (frdB), and diheme cytochrome b (frdC). It depends on FAD as a cofactor.

It localises to the cell inner membrane. It carries out the reaction a quinone + succinate = fumarate + a quinol. In terms of biological role, the fumarate reductase enzyme complex is required for fumarate respiration. This is Fumarate reductase flavoprotein subunit (frdA) from Helicobacter pylori (strain ATCC 700392 / 26695) (Campylobacter pylori).